Here is a 398-residue protein sequence, read N- to C-terminus: Putative F-box protein At3g17620 (398 aa).

Residues 1–45 (MMSDLPRDLLEERLSRVPVKSLREARFTCKNWKTLSKKRSFTKKH) enclose the F-box domain.

The polypeptide is Putative F-box protein At3g17620 (Arabidopsis thaliana (Mouse-ear cress)).